The following is a 283-amino-acid chain: MRHIAVVYKRMRPEAARLAQDIKSWLAKRNVLVFCMENIDSAGVLSSHQRVDFPQDTDLVIVLGGDGTLLSVARLIESRKIPVIGVNLGGMGFLTGITIDNCYMELERILGGDYEIEERMRLRVLVRREHREIFSHRVLNDAVINKGALARIIDLVTVIDGRFLTHYRGDGLIFSTPTGSTAYNLAAGGPIVFPTAQAIIITPICSFTLTNRPIIFPSHVIIRIELGEPIKDVTLTCDGQVGCLLAPSDRIVITAAANPLRLIKTPTVDHFEILRNKLKWGQA.

D66 functions as the Proton acceptor in the catalytic mechanism. NAD(+)-binding positions include 66-67 (DG), 140-141 (ND), R151, R168, D170, and Q240.

The protein belongs to the NAD kinase family. The cofactor is a divalent metal cation.

Its subcellular location is the cytoplasm. It carries out the reaction NAD(+) + ATP = ADP + NADP(+) + H(+). Involved in the regulation of the intracellular balance of NAD and NADP, and is a key enzyme in the biosynthesis of NADP. Catalyzes specifically the phosphorylation on 2'-hydroxyl of the adenosine moiety of NAD to yield NADP. This chain is NAD kinase, found in Syntrophobacter fumaroxidans (strain DSM 10017 / MPOB).